The primary structure comprises 178 residues: Large ribosomal subunit protein uL6 (178 aa).

Positions 159–178 (GKGIRYEGEHVRRKEGKTGK) are disordered.

It belongs to the universal ribosomal protein uL6 family. Part of the 50S ribosomal subunit.

Its function is as follows. This protein binds to the 23S rRNA, and is important in its secondary structure. It is located near the subunit interface in the base of the L7/L12 stalk, and near the tRNA binding site of the peptidyltransferase center. This chain is Large ribosomal subunit protein uL6, found in Listeria monocytogenes serotype 4b (strain CLIP80459).